The sequence spans 307 residues: Ornithine carbamoyltransferase (307 aa).

Residues 55–58, glutamine 82, arginine 106, and 133–136 each bind carbamoyl phosphate; these read STRT and HPCQ. Residues asparagine 164, aspartate 224, and 228 to 229 each bind L-ornithine; that span reads SM. Carbamoyl phosphate-binding positions include 263–264 and arginine 291; that span reads CL.

The protein belongs to the aspartate/ornithine carbamoyltransferase superfamily. OTCase family.

It is found in the cytoplasm. It catalyses the reaction carbamoyl phosphate + L-ornithine = L-citrulline + phosphate + H(+). It participates in amino-acid biosynthesis; L-arginine biosynthesis; L-arginine from L-ornithine and carbamoyl phosphate: step 1/3. Functionally, reversibly catalyzes the transfer of the carbamoyl group from carbamoyl phosphate (CP) to the N(epsilon) atom of ornithine (ORN) to produce L-citrulline. In Bradyrhizobium diazoefficiens (strain JCM 10833 / BCRC 13528 / IAM 13628 / NBRC 14792 / USDA 110), this protein is Ornithine carbamoyltransferase.